The following is a 336-amino-acid chain: MFLTLIAAIISFMVSAFTMPYFIKFYQLKKIGGQQMHEDVKQHLAKAGTPTMGGTVFLLVATAVSLLVSLFSIKNTQSLALISGILSIVVIYGIIGFLDDFLKIFKQINEGLTAKQKLALQLAGGLMFYFLHVSPSGISSINVFGYQLSLGIFYLFFVLFWVVGFSNAVNLTDGIDGLASISVVISLVTYGVIAYVQSQFDVLLLIGAMIGALLGFFCFNHKPAKVFMGDVGSLALGAMLAAISIALRQEWTLLIIGIVYVLETSSVMLQVSYFKYTKKKYGEGRRIFRMTPFHHHLELGGLSGKGKKWSEWQVDAFLWGVGSLASLLVLAILYVF.

Helical transmembrane passes span 3–23 (LTLI…PYFI), 53–73 (GGTV…LFSI), 78–98 (SLAL…IGFL), 118–138 (LALQ…PSGI), 143–163 (VFGY…FWVV), 174–194 (GIDG…GVIA), 200–220 (FDVL…FCFN), 226–246 (VFMG…ISIA), 251–271 (WTLL…MLQV), and 316–336 (AFLW…LYVF).

The protein belongs to the glycosyltransferase 4 family. MraY subfamily. Mg(2+) is required as a cofactor.

It is found in the cell membrane. The enzyme catalyses UDP-N-acetyl-alpha-D-muramoyl-L-alanyl-gamma-D-glutamyl-L-lysyl-D-alanyl-D-alanine + di-trans,octa-cis-undecaprenyl phosphate = Mur2Ac(oyl-L-Ala-gamma-D-Glu-L-Lys-D-Ala-D-Ala)-di-trans,octa-cis-undecaprenyl diphosphate + UMP. It functions in the pathway cell wall biogenesis; peptidoglycan biosynthesis. In terms of biological role, catalyzes the initial step of the lipid cycle reactions in the biosynthesis of the cell wall peptidoglycan: transfers peptidoglycan precursor phospho-MurNAc-pentapeptide from UDP-MurNAc-pentapeptide onto the lipid carrier undecaprenyl phosphate, yielding undecaprenyl-pyrophosphoryl-MurNAc-pentapeptide, known as lipid I. The sequence is that of Phospho-N-acetylmuramoyl-pentapeptide-transferase from Streptococcus pyogenes serotype M3 (strain ATCC BAA-595 / MGAS315).